Consider the following 123-residue polypeptide: uncharacterized protein (123 aa).

This is an uncharacterized protein from Escherichia coli O157:H7.